Here is a 736-residue protein sequence, read N- to C-terminus: Prospero homeobox protein 1 (736 aa).

The span at K103–D135 shows a compositional bias: polar residues. The tract at residues K103 to R146 is disordered. Positions R163 to R168 match the Nuclear localization signal motif. Disordered regions lie at residues P180–S220, Y261–E301, E319–G344, N445–Q465, and P499–R518. Acidic residues predominate over residues T264–L274. Positions E319–Q335 are enriched in basic and acidic residues. Low complexity predominate over residues P450–H460. A compositionally biased stretch (basic and acidic residues) spans G505–R518. The Prospero-type homeo domain occupies Q576–M634. The interval Q576–L734 is homeo-Prospero. Residues E635–L734 enclose the Prospero domain.

It belongs to the Prospero homeodomain family. In terms of tissue distribution, expressed most actively in the developing lens and midgut and at lower levels in the developing brain, heart, muscle and retina.

The protein resides in the nucleus. Transcription factor which may be involved in developmental processes such as cell fate determination, gene transcriptional regulation and progenitor cell regulation in a number of organs. May be essential in the development and function of the eye. May play a role in the regulation of the circadian rhythm by repressing the expression of clock genes. This is Prospero homeobox protein 1 (PROX1) from Gallus gallus (Chicken).